The chain runs to 686 residues: ATP-dependent zinc metalloprotease FtsH 1 (686 aa).

Over 1 to 33 the chain is Cytoplasmic; it reads MCFCIVSSPEAMHSNADSPSSGPGLQPVWTTLR. Residues 34 to 54 form a helical membrane-spanning segment; sequence SPYVFWIGGAILLALLVHLGI. At 55–164 the chain is on the periplasmic side; sequence KWQQASAPVR…TFAATQESDW (110 aa). A helical transmembrane segment spans residues 165–185; sequence VGTLLLWGLPLGLIVGIWLFF. Residues 186-686 lie on the Cytoplasmic side of the membrane; that stretch reads MRRMATGGRE…AEGASPSSQG (501 aa). 257 to 264 serves as a coordination point for ATP; it reads GPPGTGKT. Position 479 (His479) interacts with Zn(2+). Glu480 is an active-site residue. Positions 483 and 555 each coordinate Zn(2+). The disordered stretch occupies residues 661-686; that stretch reads YAWLKEGDGTSRNSASAEGASPSSQG. Positions 670-686 are enriched in polar residues; that stretch reads TSRNSASAEGASPSSQG.

In the central section; belongs to the AAA ATPase family. It in the C-terminal section; belongs to the peptidase M41 family. In terms of assembly, homohexamer. It depends on Zn(2+) as a cofactor.

The protein resides in the cell inner membrane. In terms of biological role, acts as a processive, ATP-dependent zinc metallopeptidase for both cytoplasmic and membrane proteins. Plays a role in the quality control of integral membrane proteins. The protein is ATP-dependent zinc metalloprotease FtsH 1 of Salinibacter ruber (strain M8).